We begin with the raw amino-acid sequence, 598 residues long: Elongation factor 4 (598 aa).

Residues Ala-5–Thr-187 enclose the tr-type G domain. Residues Asp-17–Thr-22 and Asn-134–Asp-137 each bind GTP.

It belongs to the TRAFAC class translation factor GTPase superfamily. Classic translation factor GTPase family. LepA subfamily.

The protein localises to the cell inner membrane. It catalyses the reaction GTP + H2O = GDP + phosphate + H(+). Required for accurate and efficient protein synthesis under certain stress conditions. May act as a fidelity factor of the translation reaction, by catalyzing a one-codon backward translocation of tRNAs on improperly translocated ribosomes. Back-translocation proceeds from a post-translocation (POST) complex to a pre-translocation (PRE) complex, thus giving elongation factor G a second chance to translocate the tRNAs correctly. Binds to ribosomes in a GTP-dependent manner. This is Elongation factor 4 from Psychrobacter cryohalolentis (strain ATCC BAA-1226 / DSM 17306 / VKM B-2378 / K5).